The primary structure comprises 430 residues: Glial fibrillary acidic protein (430 aa).

A disordered region spans residues 1–31 (MERRRITSARRSYASSETMVRGHGPTRHLGT). The head stretch occupies residues 1-70 (MERRRITSAR…KETRASERAE (70 aa)). Position 7 is a phosphothreonine; by AURKB and ROCK1 (Thr-7). Over residues 9–18 (ARRSYASSET) the composition is skewed to polar residues. At Arg-11 the chain carries Omega-N-methylarginine. The residue at position 12 (Ser-12) is a Phosphoserine. Position 21 is an omega-N-methylarginine (Arg-21). Residue Arg-34 is modified to Citrulline. Ser-36 is modified (phosphoserine; by AURKB and ROCK1). The residue at position 41 (Thr-41) is a Phosphothreonine. In terms of domain architecture, IF rod spans 67–375 (ERAEMMELND…KLLEGEENRI (309 aa)). The interval 71-102 (MMELNDRFASYIEKVRFLEQQNKALAAELNQL) is coil 1A. Ser-80 is modified (phosphoserine). The tract at residues 103 to 113 (RAKEPTKLADV) is linker 1. Phosphothreonine is present on residues Thr-108 and Thr-148. The coil 1B stretch occupies residues 114-212 (YQAELRELRL…EEEVRELQEQ (99 aa)). The linker 12 stretch occupies residues 213 to 228 (LAQQQVHVEMDVAKPD). Residues 229-250 (LTAALREIRTQYEAVATSNMQE) form a coil 2A region. A linker 2 region spans residues 251 to 254 (TEEW). The interval 255 to 375 (YRSKFADLTD…KLLEGEENRI (121 aa)) is coil 2B. Phosphoserine is present on Ser-267. Arg-268 carries the post-translational modification Citrulline. The residue at position 321 (Ser-321) is a Phosphoserine. The tract at residues 376–430 (TIPVQTFSNLQIRETSLDTKSVSEGHLKRNIVVKTVEMRDGEVIKESKQEHKDVM) is tail. Thr-381 carries the post-translational modification Phosphothreonine. Position 383 is a phosphoserine (Ser-383). Citrulline is present on residues Arg-404 and Arg-414.

The protein belongs to the intermediate filament family. In terms of assembly, interacts with SYNM. As to quaternary structure, interacts with PSEN1 (via N-terminus). Phosphorylated by PKN1. As to expression, expressed in the cortex and hippocampus. Expression decreases following acute and chronic corticosterone treatment.

Its subcellular location is the cytoplasm. In terms of biological role, GFAP, a class-III intermediate filament, is a cell-specific marker that, during the development of the central nervous system, distinguishes astrocytes from other glial cells. In Rattus norvegicus (Rat), this protein is Glial fibrillary acidic protein (Gfap).